Here is a 639-residue protein sequence, read N- to C-terminus: Cystathionine gamma-synthase (639 aa).

Lysine 443 is subject to N6-(pyridoxal phosphate)lysine.

This sequence belongs to the trans-sulfuration enzymes family. MET7 subfamily. The cofactor is pyridoxal 5'-phosphate.

Its subcellular location is the cytoplasm. It is found in the nucleus. It carries out the reaction O-succinyl-L-homoserine + L-cysteine = L,L-cystathionine + succinate + H(+). The protein operates within amino-acid biosynthesis; L-methionine biosynthesis via de novo pathway; L-cystathionine from O-succinyl-L-homoserine: step 1/1. Functionally, catalyzes the formation of L-cystathionine from O-succinyl-L-homoserine (OSHS) and L-cysteine, via a gamma-replacement reaction. In the absence of thiol, catalyzes gamma-elimination to form 2-oxobutanoate, succinate and ammonia. In Saccharomyces cerevisiae (strain ATCC 204508 / S288c) (Baker's yeast), this protein is Cystathionine gamma-synthase.